The chain runs to 652 residues: DNA ligase (652 aa).

Residues 29–33, 78–79, and Glu-107 contribute to the NAD(+) site; these read DSDYD and SL. Residue Lys-109 is the N6-AMP-lysine intermediate of the active site. Residues Arg-130, Glu-164, Lys-278, and Lys-302 each coordinate NAD(+). Cys-395, Cys-398, Cys-413, and Cys-418 together coordinate Zn(2+). A BRCT domain is found at 577–652; it reads NSDAALFGLT…IEDEDWLRKL (76 aa).

Belongs to the NAD-dependent DNA ligase family. LigA subfamily. It depends on Mg(2+) as a cofactor. Requires Mn(2+) as cofactor.

It carries out the reaction NAD(+) + (deoxyribonucleotide)n-3'-hydroxyl + 5'-phospho-(deoxyribonucleotide)m = (deoxyribonucleotide)n+m + AMP + beta-nicotinamide D-nucleotide.. Functionally, DNA ligase that catalyzes the formation of phosphodiester linkages between 5'-phosphoryl and 3'-hydroxyl groups in double-stranded DNA using NAD as a coenzyme and as the energy source for the reaction. It is essential for DNA replication and repair of damaged DNA. The chain is DNA ligase from Streptococcus pyogenes serotype M18 (strain MGAS8232).